A 333-amino-acid polypeptide reads, in one-letter code: MNQTLIQEILEVVEQAAIASAKLTGLGQKDEADAAAVEAMRLRMGKIEMKGKIVIGEGERDEAPMLYIGEEVGSGNGPGVDFAVDPCEGTNLCANNQRGSMAVLAASDTGGLFNAPDFYMNKLAAPPAAKGKVDIRNSATENLKILSNCLDLAIDELTVVVMDRARHKGLIKEIRECGAKIQPISDGDVQAAIACGFAGTGTHCLMGIGAAPEGVISAAAMRALGGHFQGQLVYDPAIAQTSEWADYTKEGNIKRLNEMGITDIDKIYEANELASGENVIFAGSGITDGLLFDGVKFEKDCTRTSSLVISTLDSTCRFTNTIHMKDGAKSISL.

Mn(2+) is bound by residues Asp33, Glu57, Asp85, and Glu88. Substrate contacts are provided by residues 88 to 90, Tyr119, 164 to 166, and 186 to 188; these read EGT, RAR, and DGD. Glu213 contributes to the Mn(2+) binding site.

This sequence belongs to the FBPase class 2 family. As to quaternary structure, homotetramer. The cofactor is Mn(2+).

The enzyme catalyses beta-D-fructose 1,6-bisphosphate + H2O = beta-D-fructose 6-phosphate + phosphate. The catalysed reaction is D-sedoheptulose 1,7-bisphosphate + H2O = D-sedoheptulose 7-phosphate + phosphate. The protein operates within carbohydrate biosynthesis; Calvin cycle. In terms of biological role, catalyzes the hydrolysis of fructose 1,6-bisphosphate (Fru 1,6-P2) and sedoheptulose 1,7-bisphosphate (Sed 1,7-P2) to fructose 6-phosphate and sedoheptulose 7-phosphate, respectively. This chain is D-fructose 1,6-bisphosphatase class 2/sedoheptulose 1,7-bisphosphatase, found in Prochlorococcus marinus subsp. pastoris (strain CCMP1986 / NIES-2087 / MED4).